The chain runs to 131 residues: Phosphoribosyl-AMP cyclohydrolase (131 aa).

Residue D78 participates in Mg(2+) binding. Zn(2+) is bound at residue C79. Positions 80 and 82 each coordinate Mg(2+). Residues C96 and C103 each contribute to the Zn(2+) site.

Belongs to the PRA-CH family. In terms of assembly, homodimer. Requires Mg(2+) as cofactor. Zn(2+) serves as cofactor.

The protein localises to the cytoplasm. The catalysed reaction is 1-(5-phospho-beta-D-ribosyl)-5'-AMP + H2O = 1-(5-phospho-beta-D-ribosyl)-5-[(5-phospho-beta-D-ribosylamino)methylideneamino]imidazole-4-carboxamide. Its pathway is amino-acid biosynthesis; L-histidine biosynthesis; L-histidine from 5-phospho-alpha-D-ribose 1-diphosphate: step 3/9. Its function is as follows. Catalyzes the hydrolysis of the adenine ring of phosphoribosyl-AMP. In Neisseria meningitidis serogroup C / serotype 2a (strain ATCC 700532 / DSM 15464 / FAM18), this protein is Phosphoribosyl-AMP cyclohydrolase.